The sequence spans 816 residues: H(+)/Cl(-) exchange transporter 5 (816 aa).

The Cytoplasmic segment spans residues 1–124; it reads MAMWQGAMDN…WALIHSVSDA (124 aa). Helical transmembrane passes span 125–162 and 208–231; these read FSGW…ICTG and VNYF…VKVF. Residues 237-241 carry the Selectivity filter part_1 motif; that stretch reads GSGIP. Serine 238 lines the chloride pocket. The segment at residues 240–247 is an intramembrane region (helical); the sequence is IPEIKTIL. The next 2 helical transmembrane spans lie at 256–275 and 281–300; these read LGKW…VSSG and EGPL…HRFN. The short motif at 279–283 is the Selectivity filter part_2 element; that stretch reads GKEGP. Intramembrane regions (helical) lie at residues 312–324 and 328–336; these read VLSA…VSVA and PIGGVLFSL. 5 consecutive transmembrane segments (helical) span residues 348 to 366, 389 to 414, 422 to 442, 498 to 518, and 523 to 542; these read LWRS…RSIN, LVPF…IAWC, LGKY…ILAF, MWQL…TFGM, and GLFI…LGVG. The short motif at 523 to 527 is the Selectivity filter part_3 element; sequence GLFIP. Residue phenylalanine 525 participates in chloride binding. Residues 570–584 constitute an intramembrane region (helical); the sequence is GLYAMVGAAACLGGV. Positions 585–587 form an intramembrane region, note=Loop between two helices; it reads TRM. Positions 588–599 form an intramembrane region, helical; sequence TVSLVVIMFELT. Residues 600-604 constitute an intramembrane region (note=Loop between two helices); it reads GGLEY. Residues 605–622 traverse the membrane as a helical segment; sequence IVPLMAAAMTSKWVADAL. Residues 623–816 lie on the Cytoplasmic side of the membrane; sequence GREGIYDAHI…NQDPDSILFN (194 aa). Tyrosine 628 contacts chloride. CBS domains lie at 656 to 720 and 752 to 812; these read MKPR…ARKK and ILDL…DPDS. Residues threonine 666, 687-689, and 794-797 each bind ATP; these read YSG and TKKD.

The protein belongs to the chloride channel (TC 2.A.49) family. ClC-5/CLCN5 subfamily. As to quaternary structure, interacts with NEDD4 and NEDD4L. Ubiquitinated by NEDD4L in the presence of albumin; which promotes endocytosis and proteasomal degradation.

The protein resides in the golgi apparatus membrane. It localises to the endosome membrane. It is found in the cell membrane. It carries out the reaction 2 chloride(in) + H(+)(out) = 2 chloride(out) + H(+)(in). Functionally, proton-coupled chloride transporter. Functions as antiport system and exchanges chloride ions against protons. Important for normal acidification of the endosome lumen. May play an important role in renal tubular function. The CLC channel family contains both chloride channels and proton-coupled anion transporters that exchange chloride or another anion for protons. The absence of conserved gating glutamate residues is typical for family members that function as channels. The chain is H(+)/Cl(-) exchange transporter 5 (CLCN5) from Oryctolagus cuniculus (Rabbit).